Consider the following 206-residue polypeptide: Ribosomal RNA small subunit methyltransferase G (206 aa).

S-adenosyl-L-methionine contacts are provided by residues G73, L78, 124-125 (VE), and R139.

Belongs to the methyltransferase superfamily. RNA methyltransferase RsmG family.

The protein localises to the cytoplasm. It carries out the reaction guanosine(527) in 16S rRNA + S-adenosyl-L-methionine = N(7)-methylguanosine(527) in 16S rRNA + S-adenosyl-L-homocysteine. Functionally, specifically methylates the N7 position of guanine in position 527 of 16S rRNA. This chain is Ribosomal RNA small subunit methyltransferase G, found in Photobacterium profundum (strain SS9).